Consider the following 226-residue polypeptide: Urease accessory protein UreF (226 aa).

It belongs to the UreF family. UreD, UreF and UreG form a complex that acts as a GTP-hydrolysis-dependent molecular chaperone, activating the urease apoprotein by helping to assemble the nickel containing metallocenter of UreC. The UreE protein probably delivers the nickel.

It is found in the cytoplasm. Required for maturation of urease via the functional incorporation of the urease nickel metallocenter. In Burkholderia multivorans (strain ATCC 17616 / 249), this protein is Urease accessory protein UreF.